The chain runs to 736 residues: Catalase-peroxidase (736 aa).

The tract at residues 1-21 (MSNEQKCPFSGTHGARTTVGT) is disordered. The tryptophyl-tyrosyl-methioninium (Trp-Tyr) (with M-250) cross-link spans 96-224 (WHSAGTYRTG…LAAVQMGLIY (129 aa)). H97 acts as the Proton acceptor in catalysis. Residues 224-250 (YVNPEGPDGNPDPVASGRDIRETFARM) constitute a cross-link (tryptophyl-tyrosyl-methioninium (Tyr-Met) (with W-96)). H265 is a heme b binding site.

This sequence belongs to the peroxidase family. Peroxidase/catalase subfamily. Homodimer or homotetramer. It depends on heme b as a cofactor. In terms of processing, formation of the three residue Trp-Tyr-Met cross-link is important for the catalase, but not the peroxidase activity of the enzyme.

The enzyme catalyses H2O2 + AH2 = A + 2 H2O. The catalysed reaction is 2 H2O2 = O2 + 2 H2O. Bifunctional enzyme with both catalase and broad-spectrum peroxidase activity. The protein is Catalase-peroxidase of Dechloromonas aromatica (strain RCB).